Consider the following 294-residue polypeptide: Phosphoribosylaminoimidazole-succinocarboxamide synthase (294 aa).

The protein belongs to the SAICAR synthetase family.

The catalysed reaction is 5-amino-1-(5-phospho-D-ribosyl)imidazole-4-carboxylate + L-aspartate + ATP = (2S)-2-[5-amino-1-(5-phospho-beta-D-ribosyl)imidazole-4-carboxamido]succinate + ADP + phosphate + 2 H(+). Its pathway is purine metabolism; IMP biosynthesis via de novo pathway; 5-amino-1-(5-phospho-D-ribosyl)imidazole-4-carboxamide from 5-amino-1-(5-phospho-D-ribosyl)imidazole-4-carboxylate: step 1/2. The protein is Phosphoribosylaminoimidazole-succinocarboxamide synthase of Thermoplasma volcanium (strain ATCC 51530 / DSM 4299 / JCM 9571 / NBRC 15438 / GSS1).